The chain runs to 245 residues: tRNA pseudouridine synthase A (245 aa).

The Nucleophile role is filled by Asp52. Tyr111 serves as a coordination point for substrate.

It belongs to the tRNA pseudouridine synthase TruA family. In terms of assembly, homodimer.

The catalysed reaction is uridine(38/39/40) in tRNA = pseudouridine(38/39/40) in tRNA. Functionally, formation of pseudouridine at positions 38, 39 and 40 in the anticodon stem and loop of transfer RNAs. The protein is tRNA pseudouridine synthase A of Rickettsia peacockii (strain Rustic).